A 77-amino-acid chain; its full sequence is Sec-independent protein translocase protein TatA (77 aa).

A helical membrane pass occupies residues 1–21 (MGSFSIWHWLIVLVIVMLVFG). Residues 46-77 (GEGKAAADPAQSKELRDSTTIDVEAKEKTRQQ) form a disordered region.

It belongs to the TatA/E family. The Tat system comprises two distinct complexes: a TatABC complex, containing multiple copies of TatA, TatB and TatC subunits, and a separate TatA complex, containing only TatA subunits. Substrates initially bind to the TatABC complex, which probably triggers association of the separate TatA complex to form the active translocon.

The protein localises to the cell inner membrane. Its function is as follows. Part of the twin-arginine translocation (Tat) system that transports large folded proteins containing a characteristic twin-arginine motif in their signal peptide across membranes. TatA could form the protein-conducting channel of the Tat system. In Cupriavidus necator (strain ATCC 17699 / DSM 428 / KCTC 22496 / NCIMB 10442 / H16 / Stanier 337) (Ralstonia eutropha), this protein is Sec-independent protein translocase protein TatA.